An 87-amino-acid polypeptide reads, in one-letter code: Antitoxin RelB1 (87 aa).

Antitoxin component of a type II toxin-antitoxin (TA) system. Neutralizes the effect of cognate toxin RelE1, but no other RelE or ParE toxin. This is Antitoxin RelB1 (relB1) from Caulobacter vibrioides (strain ATCC 19089 / CIP 103742 / CB 15) (Caulobacter crescentus).